A 289-amino-acid chain; its full sequence is Rhodopsin (289 aa).

Topologically, residues 1 to 7 are extracellular; that stretch reads YLVNPAG. A helical transmembrane segment spans residues 8–32; that stretch reads YAALGAYMFLLILIGSPVNFLTLYV. The Cytoplasmic portion of the chain corresponds to 33–44; that stretch reads TLEHKKLRTPLN. The chain crosses the membrane as a helical span at residues 45–67; that stretch reads YILLNLAVADLFMVLGGFTTTMY. Topologically, residues 68-81 are extracellular; it reads TSMHGYSVLGRLGC. Cysteines 81 and 158 form a disulfide. Residues 82–104 traverse the membrane as a helical segment; that stretch reads ILEGFFATLGGEIALWSLVVLAI. The short motif at 105 to 107 is the 'Ionic lock' involved in activated form stabilization element; it reads ERW. The Cytoplasmic portion of the chain corresponds to 105–123; sequence ERWIVVCKPISNFRFTEDH. Residues 124–144 traverse the membrane as a helical segment; sequence AIMGLAFSWVMALACAVPPLV. The Extracellular portion of the chain corresponds to 145 to 173; sequence GWSRYIPEGMQCSCGVDYYTRAEGFNNES. A glycan (N-linked (GlcNAc...) asparagine) is linked at Asn171. The helical transmembrane segment at 174–195 threads the bilayer; that stretch reads FVIYMFIVHFLIPLSVIFFCYG. Topologically, residues 196-223 are cytoplasmic; that stretch reads RLLCAVKEAAAAQQESETTQRPEKEVTR. Residues 224-245 traverse the membrane as a helical segment; it reads MVVIMVIAFLVCCLPNASVAWW. The Extracellular segment spans residues 246-257; that stretch reads IFCNQGSDFGPI. A helical transmembrane segment spans residues 258 to 279; that stretch reads FMTLPSFFAKSAAIYNPMIYIC. Lys267 bears the N6-(retinylidene)lysine mark. Residues 280-289 are Cytoplasmic-facing; the sequence is MNKQFRHCMI.

This sequence belongs to the G-protein coupled receptor 1 family. Opsin subfamily. In terms of processing, phosphorylated on some or all of the serine and threonine residues present in the C-terminal region. Post-translationally, contains one covalently linked retinal chromophore.

The protein resides in the membrane. It localises to the cell projection. The protein localises to the cilium. Its subcellular location is the photoreceptor outer segment. In terms of biological role, photoreceptor required for image-forming vision at low light intensity. While most salt water fish species use retinal as chromophore, most freshwater fish use 3-dehydroretinal, or a mixture of retinal and 3-dehydroretinal. Light-induced isomerization of 11-cis to all-trans retinal triggers a conformational change that activates signaling via G-proteins. Subsequent receptor phosphorylation mediates displacement of the bound G-protein alpha subunit by arrestin and terminates signaling. The sequence is that of Rhodopsin (rho) from Limnocottus bergianus.